The chain runs to 145 residues: Large ribosomal subunit protein uL11 (145 aa).

It belongs to the universal ribosomal protein uL11 family. Part of the ribosomal stalk of the 50S ribosomal subunit. Interacts with L10 and the large rRNA to form the base of the stalk. L10 forms an elongated spine to which L12 dimers bind in a sequential fashion forming a multimeric L10(L12)X complex. One or more lysine residues are methylated.

In terms of biological role, forms part of the ribosomal stalk which helps the ribosome interact with GTP-bound translation factors. The protein is Large ribosomal subunit protein uL11 of Rickettsia felis (strain ATCC VR-1525 / URRWXCal2) (Rickettsia azadi).